The sequence spans 767 residues: Syn-copalyl diphosphate synthase, chloroplastic (767 aa).

The N-terminal 47 residues, 1–47 (MPVFTASFQCVTLFGQPASAADAQPLLQGQRPFLHLHARRRRPCGPM), are a transit peptide targeting the chloroplast. Residues 45–74 (GPMLISKSPPYPASEETREWEADGQHEHTD) are disordered. The segment covering 59–74 (EETREWEADGQHEHTD) has biased composition (basic and acidic residues). Residue Lys233 coordinates substrate. The Mg(2+) site is built by Asp365 and Asp367. The DXDD motif signature appears at 365 to 368 (DIDD). A substrate-binding site is contributed by Lys453.

This sequence belongs to the terpene synthase family. Mg(2+) serves as cofactor.

The protein localises to the plastid. The protein resides in the chloroplast. It catalyses the reaction (2E,6E,10E)-geranylgeranyl diphosphate = 9alpha-copalyl diphosphate. Catalyzes the conversion of geranylgeranyl diphosphate to the phytoalexin precursor syn-copalyl diphosphate. Required for the biosynthesis of momilactones that exude from roots and act as allelochemicals against lowland weeds in paddy soil. This is Syn-copalyl diphosphate synthase, chloroplastic from Oryza sativa subsp. japonica (Rice).